The sequence spans 237 residues: Cyclic nucleotide phosphodiesterase inhibitor (237 aa).

The signal sequence occupies residues 1–20 (MAKIIISLILLLSLFSFSYG). N-linked (GlcNAc...) asparagine glycans are attached at residues Asn-28, Asn-65, and Asn-70. Cys-rich CT repeat units follow at residues 57–81 (DLCHNSACNASTGNCTLTTISCNDN), 82–105 (NPCTDDFCHPGYGCYSVPNSCDPG), 116–139 (DPCTYDFCDALNICRHSETYCNDG), 140–162 (DACTLNTCGVNGCNFTKISCDDN), and 163–186 (DPCTADYCSTLYGCYHEPIECSIK). Asn-153 carries N-linked (GlcNAc...) asparagine glycosylation. Asn-207 carries an N-linked (GlcNAc...) asparagine glycan.

Functionally, PDI acts by binding stoichiometrically to cyclic nucleotide phosphodiesterase, changing the KM of the enzyme for cAMP from 10 uM to 2 mM. The sequence is that of Cyclic nucleotide phosphodiesterase inhibitor (pdiA) from Dictyostelium discoideum (Social amoeba).